The following is a 129-amino-acid chain: Integration host factor subunit alpha (129 aa).

Residues 87–129 (SALNGEAPPEDHAEIDAREEAAADAAEARGEDFDEEGMEDMEG) form a disordered region. The segment covering 95 to 117 (PEDHAEIDAREEAAADAAEARGE) has biased composition (basic and acidic residues). Acidic residues predominate over residues 118-129 (DFDEEGMEDMEG).

This sequence belongs to the bacterial histone-like protein family. Heterodimer of an alpha and a beta chain.

In terms of biological role, this protein is one of the two subunits of integration host factor, a specific DNA-binding protein that functions in genetic recombination as well as in transcriptional and translational control. It is necessary for normal cell growth and the production of carotenoids in response to light. The chain is Integration host factor subunit alpha (ihfA) from Myxococcus xanthus.